Here is a 356-residue protein sequence, read N- to C-terminus: Beta-hexosaminidase (356 aa).

Substrate contacts are provided by residues D75, R83, R150, and 180 to 181 (KH). Catalysis depends on H193, which acts as the Proton donor/acceptor. Residue D264 is the Nucleophile of the active site.

The protein belongs to the glycosyl hydrolase 3 family. NagZ subfamily.

Its subcellular location is the cytoplasm. The catalysed reaction is Hydrolysis of terminal non-reducing N-acetyl-D-hexosamine residues in N-acetyl-beta-D-hexosaminides.. It functions in the pathway cell wall biogenesis; peptidoglycan recycling. In terms of biological role, plays a role in peptidoglycan recycling by cleaving the terminal beta-1,4-linked N-acetylglucosamine (GlcNAc) from peptide-linked peptidoglycan fragments, giving rise to free GlcNAc, anhydro-N-acetylmuramic acid and anhydro-N-acetylmuramic acid-linked peptides. The protein is Beta-hexosaminidase of Aromatoleum aromaticum (strain DSM 19018 / LMG 30748 / EbN1) (Azoarcus sp. (strain EbN1)).